Consider the following 66-residue polypeptide: Large ribosomal subunit protein bL33c (66 aa).

It belongs to the bacterial ribosomal protein bL33 family.

The protein localises to the plastid. It is found in the chloroplast. This is Large ribosomal subunit protein bL33c from Adiantum capillus-veneris (Maidenhair fern).